A 338-amino-acid polypeptide reads, in one-letter code: Glycerol-3-phosphate dehydrogenase [NAD(P)+] (338 aa).

Serine 11, tryptophan 12, histidine 32, arginine 33, and lysine 106 together coordinate NADPH. Lysine 106, glycine 137, and serine 139 together coordinate sn-glycerol 3-phosphate. Alanine 141 contributes to the NADPH binding site. 5 residues coordinate sn-glycerol 3-phosphate: lysine 192, aspartate 245, serine 255, arginine 256, and asparagine 257. Lysine 192 (proton acceptor) is an active-site residue. Arginine 256 contributes to the NADPH binding site. Valine 280 and glutamate 282 together coordinate NADPH.

This sequence belongs to the NAD-dependent glycerol-3-phosphate dehydrogenase family.

Its subcellular location is the cytoplasm. It catalyses the reaction sn-glycerol 3-phosphate + NAD(+) = dihydroxyacetone phosphate + NADH + H(+). The enzyme catalyses sn-glycerol 3-phosphate + NADP(+) = dihydroxyacetone phosphate + NADPH + H(+). The protein operates within membrane lipid metabolism; glycerophospholipid metabolism. In terms of biological role, catalyzes the reduction of the glycolytic intermediate dihydroxyacetone phosphate (DHAP) to sn-glycerol 3-phosphate (G3P), the key precursor for phospholipid synthesis. The protein is Glycerol-3-phosphate dehydrogenase [NAD(P)+] of Lysinibacillus sphaericus (strain C3-41).